The primary structure comprises 175 residues: Large ribosomal subunit protein uL10 (175 aa).

Belongs to the universal ribosomal protein uL10 family. In terms of assembly, part of the ribosomal stalk of the 50S ribosomal subunit. The N-terminus interacts with L11 and the large rRNA to form the base of the stalk. The C-terminus forms an elongated spine to which L12 dimers bind in a sequential fashion forming a multimeric L10(L12)X complex.

Its function is as follows. Forms part of the ribosomal stalk, playing a central role in the interaction of the ribosome with GTP-bound translation factors. This chain is Large ribosomal subunit protein uL10, found in Prochlorococcus marinus (strain SARG / CCMP1375 / SS120).